The primary structure comprises 333 residues: Ornithine carbamoyltransferase (333 aa).

Residues 56–59, Arg-107, and 134–137 contribute to the carbamoyl phosphate site; these read STRT and HPTQ. Residues Asn-167, Asp-231, and 235–236 contribute to the L-ornithine site; that span reads SM. Residues 273–274 and Arg-318 each bind carbamoyl phosphate; that span reads CL.

Belongs to the aspartate/ornithine carbamoyltransferase superfamily. OTCase family.

The protein resides in the cytoplasm. The enzyme catalyses carbamoyl phosphate + L-ornithine = L-citrulline + phosphate + H(+). The protein operates within amino-acid degradation; L-arginine degradation via ADI pathway; carbamoyl phosphate from L-arginine: step 2/2. Functionally, reversibly catalyzes the transfer of the carbamoyl group from carbamoyl phosphate (CP) to the N(epsilon) atom of ornithine (ORN) to produce L-citrulline. The chain is Ornithine carbamoyltransferase from Clostridium botulinum (strain Kyoto / Type A2).